The primary structure comprises 208 residues: Proheparin-binding EGF-like growth factor (208 aa).

The signal sequence occupies residues 1 to 23; sequence MKLLPSVVLKLFLAAVLSALVTG. Residues 24-62 constitute a propeptide that is removed on maturation; sequence ESLERLRRGLAAATSNPDPPTGTTNQLLPTGADRAQEVQ. The Extracellular portion of the chain corresponds to 24–160; that stretch reads ESLERLRRGL…ENPLYTYDHT (137 aa). The segment at 82-103 is disordered; that stretch reads ALATPGKEKNGKKKRKGKGLGK. The O-linked (GalNAc...) threonine glycan is linked to Thr-85. Positions 91–102 are enriched in basic residues; sequence NGKKKRKGKGLG. The 41-residue stretch at 104–144 folds into the EGF-like domain; the sequence is KRDPCLKKYKDYCIHGECRYLKELRIPSCHCLPGYHGQRCH. 3 disulfide bridges follow: Cys-108-Cys-121, Cys-116-Cys-132, and Cys-134-Cys-143. Residues 149 to 208 constitute a propeptide, C-terminal; it reads PVENPLYTYDHTTVLAVVAVVLSSVCLLVIVGLLMFRYHRRGGYDLESEEKVKLGMASSH. A helical membrane pass occupies residues 161–184; the sequence is TVLAVVAVVLSSVCLLVIVGLLMF. The Cytoplasmic portion of the chain corresponds to 185 to 208; it reads RYHRRGGYDLESEEKVKLGMASSH.

In terms of assembly, interacts with FBLN1. Interacts with EGFR and ERBB4. Post-translationally, O-glycosylated. In terms of tissue distribution, most abundant in skeletal muscle, lung, spleen brain and heart.

It localises to the secreted. It is found in the extracellular space. The protein localises to the cell membrane. Its function is as follows. Growth factor that mediates its effects via EGFR, ERBB2 and ERBB4. Required for normal cardiac valve formation and normal heart function. Promotes smooth muscle cell proliferation. May be involved in macrophage-mediated cellular proliferation. It is mitogenic for fibroblasts, but not endothelial cells. It is able to bind EGF receptor/EGFR with higher affinity than EGF itself and is a far more potent mitogen for smooth muscle cells than EGF. Also acts as a diphtheria toxin receptor. This chain is Proheparin-binding EGF-like growth factor (Hbegf), found in Rattus norvegicus (Rat).